The following is a 40-amino-acid chain: MADTTGRIPLWLIGTVTGILVIGLIGVFFYGSYSGLGSSL.

The chain crosses the membrane as a helical span at residues 8–28 (IPLWLIGTVTGILVIGLIGVF).

Belongs to the PsbJ family. As to quaternary structure, PSII is composed of 1 copy each of membrane proteins PsbA, PsbB, PsbC, PsbD, PsbE, PsbF, PsbH, PsbI, PsbJ, PsbK, PsbL, PsbM, PsbT, PsbX, PsbY, PsbZ, Psb30/Ycf12, at least 3 peripheral proteins of the oxygen-evolving complex and a large number of cofactors. It forms dimeric complexes.

It is found in the plastid. It localises to the chloroplast thylakoid membrane. Its function is as follows. One of the components of the core complex of photosystem II (PSII). PSII is a light-driven water:plastoquinone oxidoreductase that uses light energy to abstract electrons from H(2)O, generating O(2) and a proton gradient subsequently used for ATP formation. It consists of a core antenna complex that captures photons, and an electron transfer chain that converts photonic excitation into a charge separation. In Nymphaea alba (White water-lily), this protein is Photosystem II reaction center protein J.